Consider the following 148-residue polypeptide: 3-dehydroquinate dehydratase (148 aa).

The active-site Proton acceptor is the Y23. Substrate-binding residues include N75, H81, and D88. H101 (proton donor) is an active-site residue. Residues 102–103 (LS) and R112 contribute to the substrate site.

This sequence belongs to the type-II 3-dehydroquinase family. As to quaternary structure, homododecamer.

The enzyme catalyses 3-dehydroquinate = 3-dehydroshikimate + H2O. It participates in metabolic intermediate biosynthesis; chorismate biosynthesis; chorismate from D-erythrose 4-phosphate and phosphoenolpyruvate: step 3/7. Functionally, catalyzes a trans-dehydration via an enolate intermediate. This chain is 3-dehydroquinate dehydratase, found in Xylella fastidiosa (strain 9a5c).